The primary structure comprises 432 residues: 5'-deoxyadenosine deaminase (432 aa).

Residues His63 and His65 each contribute to the Zn(2+) site. Residues Glu92 and His184 each contribute to the substrate site. Zn(2+) is bound at residue His211. Glu214 and Asp299 together coordinate substrate. Asp299 contacts Zn(2+).

Belongs to the metallo-dependent hydrolases superfamily. MTA/SAH deaminase family. Homotetramer. Zn(2+) serves as cofactor.

The catalysed reaction is 5'-deoxyadenosine + H2O + H(+) = 5'-deoxyinosine + NH4(+). The enzyme catalyses S-adenosyl-L-homocysteine + H2O + H(+) = S-inosyl-L-homocysteine + NH4(+). It catalyses the reaction S-methyl-5'-thioadenosine + H2O + H(+) = S-methyl-5'-thioinosine + NH4(+). It carries out the reaction adenosine + H2O + H(+) = inosine + NH4(+). It participates in amino-acid biosynthesis; S-adenosyl-L-methionine biosynthesis. Its function is as follows. Catalyzes the deamination of three SAM-derived enzymatic products, namely 5'-deoxyadenosine, S-adenosyl-L-homocysteine, and 5'-methylthioadenosine, to produce the inosine analogs. Can also deaminate adenosine. The preferred substrate for this enzyme is 5'-deoxyadenosine, but all these substrates are efficiently deaminated. Likely functions in a S-adenosyl-L-methionine (SAM) recycling pathway from S-adenosyl-L-homocysteine (SAH) produced from SAM-dependent methylation reactions. May also be involved in the recycling of 5'-deoxyadenosine, whereupon the 5'-deoxyribose moiety of 5'-deoxyinosine is further metabolized to deoxyhexoses used for the biosynthesis of aromatic amino acids in methanogens. The protein is 5'-deoxyadenosine deaminase of Methanosarcina mazei (strain ATCC BAA-159 / DSM 3647 / Goe1 / Go1 / JCM 11833 / OCM 88) (Methanosarcina frisia).